The following is a 148-amino-acid chain: Large ribosomal subunit protein bL9 (148 aa).

It belongs to the bacterial ribosomal protein bL9 family.

Its function is as follows. Binds to the 23S rRNA. The protein is Large ribosomal subunit protein bL9 of Caldicellulosiruptor saccharolyticus (strain ATCC 43494 / DSM 8903 / Tp8T 6331).